A 658-amino-acid chain; its full sequence is Threonine--tRNA ligase (658 aa).

The TGS domain occupies 1–61; the sequence is MSDVRVIIQR…RDGESVEPVE (61 aa). The interval 259–554 is catalytic; sequence DHRKLGNELD…LLEHYAGAFP (296 aa). Zn(2+) is bound by residues Cys-353, His-404, and His-531.

The protein belongs to the class-II aminoacyl-tRNA synthetase family. Homodimer. Requires Zn(2+) as cofactor.

The protein resides in the cytoplasm. The catalysed reaction is tRNA(Thr) + L-threonine + ATP = L-threonyl-tRNA(Thr) + AMP + diphosphate + H(+). Functionally, catalyzes the attachment of threonine to tRNA(Thr) in a two-step reaction: L-threonine is first activated by ATP to form Thr-AMP and then transferred to the acceptor end of tRNA(Thr). Also edits incorrectly charged L-seryl-tRNA(Thr). The sequence is that of Threonine--tRNA ligase from Streptomyces griseus subsp. griseus (strain JCM 4626 / CBS 651.72 / NBRC 13350 / KCC S-0626 / ISP 5235).